A 384-amino-acid polypeptide reads, in one-letter code: Kinesin-like protein KIF25 (384 aa).

The segment at 1-20 is disordered; the sequence is MTWTSGQLQREKQARPGSGA. Residues 7 to 363 enclose the Kinesin motor domain; that stretch reads QLQREKQARP…LGFGIRARQV (357 aa). 65–72 contributes to the ATP binding site; that stretch reads GQTGSGKS. Disordered regions lie at residues 217-256 and 362-384; these read DQAC…NPAG and QVQR…RRPD.

The protein belongs to the TRAFAC class myosin-kinesin ATPase superfamily. Kinesin family. As to quaternary structure, homotetramer.

Its subcellular location is the cytoplasm. It localises to the cytoskeleton. The protein localises to the microtubule organizing center. It is found in the centrosome. In terms of biological role, minus-end microtubule-dependent motor protein. Acts as a negative regulator of centrosome separation required to prevent premature centrosome separation during interphase. Required to maintain a centered nucleus to ensure that the spindle is stably oriented at the onset of mitosis. May also act as a negative regulator of amino acid starvation-induced autophagy. The protein is Kinesin-like protein KIF25 of Homo sapiens (Human).